Reading from the N-terminus, the 289-residue chain is MRKFTAFACGTGAGLAAYYLQKLRDPQLAVHNSWTNSDRPISECALWDSNWDFRDPKSLVRPQKNDLPQEQNRYNSDLEKHVAKSARHIILIRHGEYLDVGDSDDTHHLTDRGRLQAKYTGQRLRELGIKWDKVIASNMVRAQETADIILNQIDYDKAKLKHCSYLREGAPIPPQPPVGHWKPEASQFFRDGARIEAAFRRYFHRALPEQEKESYTLIVGHGNVIRYFVCRALQFPAEAWLRISINHASITWLTISPSGNVSIKYLGDTGFMPAKYLTHRIPRDAKNVV.

A helical membrane pass occupies residues 7 to 23; it reads FACGTGAGLAAYYLQKL.

It belongs to the phosphoglycerate mutase family. BPG-dependent PGAM subfamily. Interacts with Pk92B/ASK1.

The protein localises to the mitochondrion outer membrane. The catalysed reaction is O-phospho-L-seryl-[protein] + H2O = L-seryl-[protein] + phosphate. It catalyses the reaction O-phospho-L-threonyl-[protein] + H2O = L-threonyl-[protein] + phosphate. Its function is as follows. Displays phosphatase activity for serine/threonine residues, and dephosphorylates and activates Pk92B kinase. Has apparently no phosphoglycerate mutase activity. The chain is Serine/threonine-protein phosphatase Pgam5, mitochondrial from Drosophila virilis (Fruit fly).